The primary structure comprises 300 residues: Haloalkane dehalogenase (300 aa).

An AB hydrolase-1 domain is found at 32-155; that stretch reads AIVFQHGNPT…PAVRGVFQGF (124 aa). The Nucleophile role is filled by D109. The active-site Proton donor is E133. The active-site Proton acceptor is H273.

This sequence belongs to the haloalkane dehalogenase family. Type 2 subfamily. Monomer.

The catalysed reaction is 1-haloalkane + H2O = a halide anion + a primary alcohol + H(+). In terms of biological role, catalyzes hydrolytic cleavage of carbon-halogen bonds in halogenated aliphatic compounds, leading to the formation of the corresponding primary alcohols, halide ions and protons. The polypeptide is Haloalkane dehalogenase (Mycobacterium bovis (strain ATCC BAA-935 / AF2122/97)).